We begin with the raw amino-acid sequence, 552 residues long: FERRY endosomal RAB5 effector complex subunit 3 (552 aa).

Residue S79 is modified to Phosphoserine.

As to quaternary structure, component of the FERRY complex composed of five subunits, TBCK, PPP1R21, FERRY3, CRYZL1 and GATD1 with a ratio of 1:2:1:2:4, respectively.

The protein localises to the cytoplasm. The protein resides in the early endosome. Functionally, component of the FERRY complex (Five-subunit Endosomal Rab5 and RNA/ribosome intermediary). The FERRY complex directly interacts with mRNAs and RAB5A, and functions as a RAB5A effector involved in the localization and the distribution of specific mRNAs most likely by mediating their endosomal transport. The complex recruits mRNAs and ribosomes to early endosomes through direct mRNA-interaction. Plays a role in mast cell degranulation. The chain is FERRY endosomal RAB5 effector complex subunit 3 from Rattus norvegicus (Rat).